The chain runs to 90 residues: Putative septation protein SpoVG (90 aa).

Belongs to the SpoVG family.

Could be involved in septation. The polypeptide is Putative septation protein SpoVG (Clostridium perfringens (strain ATCC 13124 / DSM 756 / JCM 1290 / NCIMB 6125 / NCTC 8237 / Type A)).